A 383-amino-acid polypeptide reads, in one-letter code: Chaperone protein DnaJ (383 aa).

The J domain occupies 6-70 (DYYDVLGVGR…QKRAAYDQYG (65 aa)). The CR-type zinc-finger motif lies at 140 to 222 (GKETKISYSR…CHGTGREEER (83 aa)). Residues Cys-153, Cys-156, Cys-170, Cys-173, Cys-196, Cys-199, Cys-210, and Cys-213 each coordinate Zn(2+). 4 CXXCXGXG motif repeats span residues 153–160 (CHTCHGSG), 170–177 (CHKCHGAG), 196–203 (CDVCGGTG), and 210–217 (CDTCHGTG).

Belongs to the DnaJ family. In terms of assembly, homodimer. Requires Zn(2+) as cofactor.

The protein localises to the cytoplasm. Functionally, participates actively in the response to hyperosmotic and heat shock by preventing the aggregation of stress-denatured proteins and by disaggregating proteins, also in an autonomous, DnaK-independent fashion. Unfolded proteins bind initially to DnaJ; upon interaction with the DnaJ-bound protein, DnaK hydrolyzes its bound ATP, resulting in the formation of a stable complex. GrpE releases ADP from DnaK; ATP binding to DnaK triggers the release of the substrate protein, thus completing the reaction cycle. Several rounds of ATP-dependent interactions between DnaJ, DnaK and GrpE are required for fully efficient folding. Also involved, together with DnaK and GrpE, in the DNA replication of plasmids through activation of initiation proteins. This chain is Chaperone protein DnaJ, found in Latilactobacillus sakei (Lactobacillus sakei).